A 1505-amino-acid chain; its full sequence is Synaptonemal complex protein 2 (1505 aa).

The disordered stretch occupies residues 439-483; the sequence is EKSNLQKKLTNPLEPDNSSSQRDRKNSQDEITTPSRKKMSEASMI. 2 positions are modified to phosphoserine: S457 and S465. The residue at position 471 (T471) is a Phosphothreonine. Position 494 is a phosphoserine (S494). Phosphothreonine is present on T503. 4 positions are modified to phosphoserine: S507, S516, S525, and S534. The interval 536 to 571 is disordered; it reads KSRQSDGRNRGNNRANHNKTATVQNKGHEHHESPDQ. A phosphothreonine mark is found at T613 and T638. Phosphoserine is present on residues S651, S655, and S746. The disordered stretch occupies residues 745–764; the sequence is KSPSRKSMRSHTKSRKELMS. Residues 748 to 758 are compositionally biased toward basic residues; sequence SRKSMRSHTKS. Position 920 is a phosphoserine (S920). Position 922 is a phosphothreonine (T922). 2 disordered regions span residues 949–974 and 1035–1080; these read YSRNKNTKKCKSIKSRSSTEKGQPRS and KEET…NGRE. The segment covering 953-962 has biased composition (basic residues); it reads KNTKKCKSIK. A phosphoserine mark is found at S1121, S1123, S1130, S1146, S1150, S1162, S1165, and S1170. At T1174 the chain carries Phosphothreonine. A Phosphoserine modification is found at S1188. A disordered region spans residues 1199–1239; it reads NSYSDVSSNSSEKLYMEPESPDSCENHVQSKREENHAASPF. Over residues 1200–1209 the composition is skewed to low complexity; the sequence is SYSDVSSNSS. Phosphoserine is present on residues S1218 and S1221. Positions 1222-1234 are enriched in basic and acidic residues; it reads CENHVQSKREENH. 3 positions are modified to phosphoserine: S1237, S1280, and S1283. The residue at position 1318 (T1318) is a Phosphothreonine. The stretch at 1384-1435 forms a coiled coil; the sequence is ENIDKFQVTLLDELEKVEKDSQTLRDLEKEFVDIEEKIVHKMRAFHQSERER.

The protein belongs to the SYCP2 family. In terms of assembly, component of the lateral elements of synaptonemal complexes. Interacts with TEX11. Heterodimer with SYCP3. Interacts with SYCP3, SMC1A and SMC3. In terms of processing, phosphorylated. In terms of tissue distribution, detected in spermatocytes and testis (at protein level). Spermatocytes and oocytes. Meiotic prophase cells.

The protein localises to the nucleus. The protein resides in the chromosome. Major component of the axial/lateral elements of synaptonemal complexes (SCS) during meiotic prophase. Plays a role in the assembly of synaptonemal complexes. Required for normal meiotic chromosome synapsis during oocyte and spermatocyte development and for normal male and female fertility. Required for insertion of SYCP3 into synaptonemal complexes. May be involved in the organization of chromatin by temporarily binding to DNA scaffold attachment regions. Requires SYCP3, but not SYCP1, in order to be incorporated into the axial/lateral elements. The sequence is that of Synaptonemal complex protein 2 (Sycp2) from Rattus norvegicus (Rat).